We begin with the raw amino-acid sequence, 532 residues long: Type 2 DNA topoisomerase 6 subunit B (532 aa).

Residues Asn-41, Asp-75, 96–97 (SK), 105–112 (GMYGLGVK), and Lys-427 contribute to the ATP site.

Belongs to the TOP6B family. As to quaternary structure, homodimer. Heterotetramer of two Top6A and two Top6B chains.

The enzyme catalyses ATP-dependent breakage, passage and rejoining of double-stranded DNA.. Its function is as follows. Relaxes both positive and negative superturns and exhibits a strong decatenase activity. This chain is Type 2 DNA topoisomerase 6 subunit B, found in Sulfurisphaera tokodaii (strain DSM 16993 / JCM 10545 / NBRC 100140 / 7) (Sulfolobus tokodaii).